We begin with the raw amino-acid sequence, 944 residues long: LPS-assembly protein LptD (944 aa).

The first 33 residues, 1 to 33 (MALKSPAFRRKFPLLVTGGLLALQPLATSFVVA), serve as a signal peptide directing secretion. Positions 52-102 (KATGNLPPRPVHPGAAAASSGAEAPGEVGEAQAEKPMLVTESKGRGLKSRS) are disordered. The segment covering 64–82 (PGAAAASSGAEAPGEVGEA) has biased composition (low complexity).

It belongs to the LptD family. In terms of assembly, component of the lipopolysaccharide transport and assembly complex. Interacts with LptE and LptA.

It localises to the cell outer membrane. Together with LptE, is involved in the assembly of lipopolysaccharide (LPS) at the surface of the outer membrane. The sequence is that of LPS-assembly protein LptD from Pseudomonas entomophila (strain L48).